A 297-amino-acid polypeptide reads, in one-letter code: F-box only protein 2 (297 aa).

The interval 1-47 (MDGDGDPESVSHPEEASPEEQPEEAGAEASAEEEQLREAEEEEEAEA) is disordered. Residues 16 to 47 (ASPEEQPEEAGAEASAEEEQLREAEEEEEAEA) are compositionally biased toward acidic residues. One can recognise an F-box domain in the interval 48–95 (VEYLAELPEPLLLRVLAELPATELVQACRLVCLRWKELVDGAPLWLLK). A Phosphoserine modification is found at S106. The 181-residue stretch at 117-297 (FYFLSKRRRN…VTNSSVWVEP (181 aa)) folds into the FBA domain. A carbohydrate-binding positions include 214-216 (RTD) and 279-280 (YW).

Component of the SCF(FBXO2) complex consisting of CUL1, RBX1, SKP1 and FBXO2. Predominantly detected as heterodimer with SKP1; the heterodimer with SKP1 is not part of the SCF(FBXO2) complex. In terms of tissue distribution, detected in brain and cochlea, in epithelial support cells and hair cells of the organ of Corti (at protein level).

The protein resides in the cytoplasm. The protein localises to the microsome membrane. The protein operates within protein modification; protein ubiquitination. Functionally, substrate recognition component of a SCF (SKP1-CUL1-F-box protein) E3 ubiquitin-protein ligase complex that mediates the ubiquitination and subsequent proteasomal degradation of target proteins. Involved in the endoplasmic reticulum-associated degradation pathway (ERAD) for misfolded lumenal proteins by recognizing and binding sugar chains on unfolded glycoproteins that are retrotranslocated into the cytosol and promoting their ubiquitination and subsequent degradation. Prevents formation of cytosolic aggregates of unfolded glycoproteins that have been retrotranslocated into the cytosol. Able to recognize and bind denatured glycoproteins, preferentially those of the high-mannose type. This chain is F-box only protein 2 (Fbxo2), found in Mus musculus (Mouse).